Here is a 423-residue protein sequence, read N- to C-terminus: MEVIQVKKSLNLKGEVKIDGAKNSALPIIAASLLGTEPIILEDVPKLKDVSIILKVLEELGSKVTYLDKNKVEIDSSNVNNSVTPHELMNKMRASFLVMGPLLTRLGQTKTYLPGGCAIGSRPVDLHLKGFKALGAEIESTDEKIEAIAKDGLIGGEIYLDFPSVGATQNIMMAATMAKGETVIENAAKEPEIVDLASFLNKLGAKVRGAGTSTIRIVGVDKLHGARHTIIPDRIEAATFMVASAITRGDVTVKNCISSHIMPIIAKLREVGCEVIENEDEDSIRVIATGRLKGTKIKTLPYPGFPTDVQAQFMALMTVCKGQSSVEETVFENRFMHVEQLQKMGAAIATEGNEASIAGVDSLQGATVKSTDLRAGAALILAGLVADGTTNVTDIYHIDRGYDDIVSKFKKLGANIERIEIED.

22–23 (KN) contributes to the phosphoenolpyruvate binding site. Residue arginine 93 coordinates UDP-N-acetyl-alpha-D-glucosamine. Cysteine 117 acts as the Proton donor in catalysis. A 2-(S-cysteinyl)pyruvic acid O-phosphothioketal modification is found at cysteine 117. UDP-N-acetyl-alpha-D-glucosamine is bound by residues 122–126 (RPVDL), aspartate 308, and valine 330.

Belongs to the EPSP synthase family. MurA subfamily.

Its subcellular location is the cytoplasm. The catalysed reaction is phosphoenolpyruvate + UDP-N-acetyl-alpha-D-glucosamine = UDP-N-acetyl-3-O-(1-carboxyvinyl)-alpha-D-glucosamine + phosphate. It functions in the pathway cell wall biogenesis; peptidoglycan biosynthesis. Its function is as follows. Cell wall formation. Adds enolpyruvyl to UDP-N-acetylglucosamine. The polypeptide is UDP-N-acetylglucosamine 1-carboxyvinyltransferase (Finegoldia magna (strain ATCC 29328 / DSM 20472 / WAL 2508) (Peptostreptococcus magnus)).